Here is a 332-residue protein sequence, read N- to C-terminus: 6-phosphogluconolactonase (332 aa).

Belongs to the cycloisomerase 2 family.

It carries out the reaction 6-phospho-D-glucono-1,5-lactone + H2O = 6-phospho-D-gluconate + H(+). The protein operates within carbohydrate degradation; pentose phosphate pathway; D-ribulose 5-phosphate from D-glucose 6-phosphate (oxidative stage): step 2/3. Catalyzes the hydrolysis of 6-phosphogluconolactone to 6-phosphogluconate. This chain is 6-phosphogluconolactonase, found in Pectobacterium carotovorum subsp. carotovorum (strain PC1).